We begin with the raw amino-acid sequence, 232 residues long: Orotidine 5'-phosphate decarboxylase (232 aa).

Residues Asp-13, Lys-35, Asp-62–Thr-71, Thr-121, Arg-182, Gln-191, Gly-211, and Arg-212 each bind substrate. The active-site Proton donor is the Lys-64.

This sequence belongs to the OMP decarboxylase family. Type 1 subfamily. Homodimer.

It carries out the reaction orotidine 5'-phosphate + H(+) = UMP + CO2. It functions in the pathway pyrimidine metabolism; UMP biosynthesis via de novo pathway; UMP from orotate: step 2/2. Functionally, catalyzes the decarboxylation of orotidine 5'-monophosphate (OMP) to uridine 5'-monophosphate (UMP). The polypeptide is Orotidine 5'-phosphate decarboxylase (Teredinibacter turnerae (strain ATCC 39867 / T7901)).